The sequence spans 190 residues: Crossover junction endodeoxyribonuclease RuvC (190 aa).

Residues Asp-8, Glu-67, and Asp-139 contribute to the active site. Mg(2+)-binding residues include Asp-8, Glu-67, and Asp-139.

The protein belongs to the RuvC family. Homodimer which binds Holliday junction (HJ) DNA. The HJ becomes 2-fold symmetrical on binding to RuvC with unstacked arms; it has a different conformation from HJ DNA in complex with RuvA. In the full resolvosome a probable DNA-RuvA(4)-RuvB(12)-RuvC(2) complex forms which resolves the HJ. Requires Mg(2+) as cofactor.

Its subcellular location is the cytoplasm. The enzyme catalyses Endonucleolytic cleavage at a junction such as a reciprocal single-stranded crossover between two homologous DNA duplexes (Holliday junction).. Functionally, the RuvA-RuvB-RuvC complex processes Holliday junction (HJ) DNA during genetic recombination and DNA repair. Endonuclease that resolves HJ intermediates. Cleaves cruciform DNA by making single-stranded nicks across the HJ at symmetrical positions within the homologous arms, yielding a 5'-phosphate and a 3'-hydroxyl group; requires a central core of homology in the junction. The consensus cleavage sequence is 5'-(A/T)TT(C/G)-3'. Cleavage occurs on the 3'-side of the TT dinucleotide at the point of strand exchange. HJ branch migration catalyzed by RuvA-RuvB allows RuvC to scan DNA until it finds its consensus sequence, where it cleaves and resolves the cruciform DNA. This is Crossover junction endodeoxyribonuclease RuvC from Haemophilus influenzae (strain 86-028NP).